A 394-amino-acid polypeptide reads, in one-letter code: Elongation factor Tu (394 aa).

One can recognise a tr-type G domain in the interval 10–204; the sequence is KPHVNVGTIG…ALDNYIPEPE (195 aa). A G1 region spans residues 19–26; that stretch reads GHVDHGKT. Residue 19–26 coordinates GTP; it reads GHVDHGKT. Threonine 26 is a Mg(2+) binding site. The interval 60–64 is G2; it reads GITIS. Residues 81–84 form a G3 region; sequence DCPG. GTP is bound by residues 81–85 and 136–139; these read DCPGH and NKCD. The interval 136 to 139 is G4; that stretch reads NKCD. The tract at residues 174–176 is G5; sequence SAL.

The protein belongs to the TRAFAC class translation factor GTPase superfamily. Classic translation factor GTPase family. EF-Tu/EF-1A subfamily. Monomer.

The protein localises to the cytoplasm. It carries out the reaction GTP + H2O = GDP + phosphate + H(+). Its function is as follows. GTP hydrolase that promotes the GTP-dependent binding of aminoacyl-tRNA to the A-site of ribosomes during protein biosynthesis. The sequence is that of Elongation factor Tu from Idiomarina loihiensis (strain ATCC BAA-735 / DSM 15497 / L2-TR).